Consider the following 79-residue polypeptide: Small ribosomal subunit protein bS16 (79 aa).

The protein belongs to the bacterial ribosomal protein bS16 family.

The sequence is that of Small ribosomal subunit protein bS16 from Nitratidesulfovibrio vulgaris (strain ATCC 29579 / DSM 644 / CCUG 34227 / NCIMB 8303 / VKM B-1760 / Hildenborough) (Desulfovibrio vulgaris).